We begin with the raw amino-acid sequence, 515 residues long: Pisatin demethylase (515 aa).

C453 contributes to the heme binding site.

Belongs to the cytochrome P450 family. Heme is required as a cofactor.

In terms of biological role, can detoxify the phytoalexin pisatin from garden pea. Pisatin is an antimicrobial compound produced by pea in response to infection by plant pathogens. The protein is Pisatin demethylase (PDAT9) of Fusarium vanettenii (Neocosmospora pisi).